A 377-amino-acid chain; its full sequence is Phospho-N-acetylmuramoyl-pentapeptide-transferase (377 aa).

The next 11 helical transmembrane spans lie at 9-29, 59-79, 85-105, 122-142, 155-175, 178-198, 210-230, 247-267, 274-294, 299-319, and 354-374; these read YITLRAVLACATALLIGLVAG, TPTMGGALILIAIAISTLLWA, FVWVVLLVTFGFGWIGWMDDY, FFWQATIGLVAAVYLAFAVSA, WVGSGFTMPLPTRADLIVPFF, VSYPLGVLGFVALTWAVIVGT, GLAIMPTVMVGSALGIFAYVV, AAELMVLCAAIGGAGLAFLWF, VFMGDVGALALGGALGTIAVI, IVLFIMGGVFVVETLSVMVQV, and QVVVRFWIITMMLVLVGLSTL.

Belongs to the glycosyltransferase 4 family. MraY subfamily. It depends on Mg(2+) as a cofactor.

Its subcellular location is the cell inner membrane. It catalyses the reaction UDP-N-acetyl-alpha-D-muramoyl-L-alanyl-gamma-D-glutamyl-meso-2,6-diaminopimeloyl-D-alanyl-D-alanine + di-trans,octa-cis-undecaprenyl phosphate = di-trans,octa-cis-undecaprenyl diphospho-N-acetyl-alpha-D-muramoyl-L-alanyl-D-glutamyl-meso-2,6-diaminopimeloyl-D-alanyl-D-alanine + UMP. It functions in the pathway cell wall biogenesis; peptidoglycan biosynthesis. Functionally, catalyzes the initial step of the lipid cycle reactions in the biosynthesis of the cell wall peptidoglycan: transfers peptidoglycan precursor phospho-MurNAc-pentapeptide from UDP-MurNAc-pentapeptide onto the lipid carrier undecaprenyl phosphate, yielding undecaprenyl-pyrophosphoryl-MurNAc-pentapeptide, known as lipid I. The polypeptide is Phospho-N-acetylmuramoyl-pentapeptide-transferase (Bordetella bronchiseptica (strain ATCC BAA-588 / NCTC 13252 / RB50) (Alcaligenes bronchisepticus)).